A 538-amino-acid polypeptide reads, in one-letter code: Reticuline oxidase (538 aa).

The N-terminal stretch at 1 to 23 is a signal peptide; sequence MENKTPIFFSLSIFLSLLNCALG. An intrachain disulfide couples Cys30 to Cys89. A glycan (N-linked (GlcNAc...) asparagine) is linked at Asn38. In terms of domain architecture, FAD-binding PCMH-type spans 67–241; sequence LISKPSAIIL…YAWKIKLLPV (175 aa). The 6-(S-cysteinyl)-8alpha-(pros-histidyl)-FAD (His-Cys) cross-link spans 104–166; sequence HSYEGLSYTS…SKLGFTAGWC (63 aa). Asn423 and Asn471 each carry an N-linked (GlcNAc...) asparagine glycan.

This sequence belongs to the oxygen-dependent FAD-linked oxidoreductase family. FAD serves as cofactor. A metal cation is required as a cofactor. Post-translationally, the FAD cofactor is bound via a bicovalent 6-S-cysteinyl, 8alpha-N1-histidyl FAD linkage.

The protein resides in the cytoplasmic vesicle. The enzyme catalyses (S)-reticuline + O2 = (S)-scoulerine + H2O2 + H(+). Its pathway is alkaloid biosynthesis; (S)-scoulerine biosynthesis; (S)-scoulerine from (S)-reticuline: step 1/1. Its function is as follows. Essential to the formation of benzophenanthridine alkaloids in the response of plants to pathogenic attack. Catalyzes the stereospecific conversion of the N-methyl moiety of (S)-reticuline into the berberine bridge carbon of (S)-scoulerine. The chain is Reticuline oxidase (BBE1) from Eschscholzia californica (California poppy).